The chain runs to 341 residues: Porin-like protein L (341 aa).

A signal peptide spans 1–21; sequence MNKKLIALAVAAASISSVATA.

It belongs to the Gram-negative porin family. In terms of assembly, homotrimer.

The protein localises to the cell outer membrane. Functionally, forms pores that allow passive diffusion of small molecules across the outer membrane. The polypeptide is Porin-like protein L (ompL) (Photobacterium profundum (strain SS9)).